The chain runs to 341 residues: Zinc transporter ZIP11 (341 aa).

7 helical membrane passes run 12–32 (LLGTFFTWGLTAAGAALVFVF), 44–64 (LGFAAGVMLAASYWSLLAPAV), 72–92 (GFGSLAFLPVAIGFTLGAAFV), 193–213 (IALLILAITIHNIPEGLAVGV), 262–284 (FWYGQLSGMVEPLAGVFGAFAVV), 289–306 (ILPYALAFAAGAMVYVIM), and 321–341 (LASWASILGFVVMMSLDVGLG).

It belongs to the ZIP transporter (TC 2.A.5) family.

It is found in the cell membrane. The protein localises to the nucleus. The protein resides in the cytoplasm. Its subcellular location is the golgi apparatus. It carries out the reaction Zn(2+)(in) = Zn(2+)(out). It catalyses the reaction Cu(2+)(in) = Cu(2+)(out). Zinc importer that regulates cytosolic zinc concentrations either via zinc influx from the extracellular compartment or efflux from intracellular organelles such as Golgi apparatus. May transport copper ions as well. The transport mechanism remains to be elucidated. In Bos taurus (Bovine), this protein is Zinc transporter ZIP11 (SLC39A11).